A 423-amino-acid chain; its full sequence is D-tagatose-1,6-bisphosphate aldolase subunit GatZ (423 aa).

It belongs to the GatZ/KbaZ family. GatZ subfamily. As to quaternary structure, forms a complex with GatY.

It participates in carbohydrate metabolism; D-tagatose 6-phosphate degradation; D-glyceraldehyde 3-phosphate and glycerone phosphate from D-tagatose 6-phosphate: step 2/2. Its function is as follows. Component of the tagatose-1,6-bisphosphate aldolase GatYZ that is required for full activity and stability of the Y subunit. Could have a chaperone-like function for the proper and stable folding of GatY. When expressed alone, GatZ does not show any aldolase activity. Is involved in the catabolism of galactitol. This is D-tagatose-1,6-bisphosphate aldolase subunit GatZ from Salmonella typhimurium (strain LT2 / SGSC1412 / ATCC 700720).